Consider the following 260-residue polypeptide: Ribonuclease HII (260 aa).

One can recognise an RNase H type-2 domain in the interval 73–260; that stretch reads LHIAGIDEAG…APVQQQLDIV (188 aa). 3 residues coordinate a divalent metal cation: Asp-79, Glu-80, and Asp-171.

Belongs to the RNase HII family. Mn(2+) is required as a cofactor. Mg(2+) serves as cofactor.

The protein localises to the cytoplasm. It catalyses the reaction Endonucleolytic cleavage to 5'-phosphomonoester.. Functionally, endonuclease that specifically degrades the RNA of RNA-DNA hybrids. This chain is Ribonuclease HII, found in Desulfitobacterium hafniense (strain Y51).